A 157-amino-acid chain; its full sequence is UPF0262 protein Atu0536 (157 aa).

It belongs to the UPF0262 family.

In Agrobacterium fabrum (strain C58 / ATCC 33970) (Agrobacterium tumefaciens (strain C58)), this protein is UPF0262 protein Atu0536.